Reading from the N-terminus, the 74-residue chain is Probable molt-inhibiting hormone (74 aa).

Cystine bridges form between Cys6–Cys43, Cys23–Cys39, and Cys26–Cys52. Ala74 is modified (alanine amide).

It localises to the secreted. Functionally, inhibits Y-organs where molting hormone (ecdysteroid) is secreted. A molting cycle is initiated when MIH secretion diminishes or stops. Has little or no hyperglycemic activity. This Jasus lalandii (Cape rock lobster) protein is Probable molt-inhibiting hormone.